The following is a 955-amino-acid chain: Eukaryotic translation initiation factor 3 subunit A (955 aa).

Residues 96-127 (LSLAEQRVTDAQAQADKIADEEEADDLEAEET) are a coiled coil. The region spanning 325–498 (YQRVASFVLL…RSVLFEEVRA (174 aa)) is the PCI domain. Coiled coils occupy residues 533-636 (AEAR…INAK) and 752-860 (KREA…KRAG). Basic and acidic residues predominate over residues 789-858 (RAEEEAKAAA…ELEAKLEAKR (70 aa)). The segment at 789–955 (RAEEEAKAAA…GRYIPPSQRN (167 aa)) is disordered.

It belongs to the eIF-3 subunit A family. Component of the eukaryotic translation initiation factor 3 (eIF-3) complex.

It localises to the cytoplasm. Its function is as follows. RNA-binding component of the eukaryotic translation initiation factor 3 (eIF-3) complex, which is involved in protein synthesis of a specialized repertoire of mRNAs and, together with other initiation factors, stimulates binding of mRNA and methionyl-tRNAi to the 40S ribosome. The eIF-3 complex specifically targets and initiates translation of a subset of mRNAs involved in cell proliferation. This Yarrowia lipolytica (strain CLIB 122 / E 150) (Yeast) protein is Eukaryotic translation initiation factor 3 subunit A.